The chain runs to 496 residues: Glutamyl-tRNA(Gln) amidotransferase subunit A (496 aa).

Catalysis depends on charge relay system residues Lys75 and Ser150. Ser174 acts as the Acyl-ester intermediate in catalysis.

This sequence belongs to the amidase family. GatA subfamily. Heterotrimer of A, B and C subunits.

It catalyses the reaction L-glutamyl-tRNA(Gln) + L-glutamine + ATP + H2O = L-glutaminyl-tRNA(Gln) + L-glutamate + ADP + phosphate + H(+). In terms of biological role, allows the formation of correctly charged Gln-tRNA(Gln) through the transamidation of misacylated Glu-tRNA(Gln) in organisms which lack glutaminyl-tRNA synthetase. The reaction takes place in the presence of glutamine and ATP through an activated gamma-phospho-Glu-tRNA(Gln). The protein is Glutamyl-tRNA(Gln) amidotransferase subunit A of Burkholderia vietnamiensis (strain G4 / LMG 22486) (Burkholderia cepacia (strain R1808)).